A 438-amino-acid polypeptide reads, in one-letter code: Chromosomal replication initiator protein DnaA (438 aa).

Positions 1-68 (MKDNILSALK…VVKESLGKDA (68 aa)) are domain I, interacts with DnaA modulators. The domain II stretch occupies residues 68–98 (ATFEIVYKEIDITQENEEKGPLVRKRPLLIT). Residues 99 to 314 (PLNPKYTFEN…GAILKLIAYK (216 aa)) are domain III, AAA+ region. 4 residues coordinate ATP: Gly-142, Gly-144, Lys-145, and Thr-146. Residues 315 to 438 (NLYGSLNLSI…TKNFAQGESI (124 aa)) form a domain IV, binds dsDNA region.

The protein belongs to the DnaA family. As to quaternary structure, oligomerizes as a right-handed, spiral filament on DNA at oriC.

It localises to the cytoplasm. Its function is as follows. Plays an essential role in the initiation and regulation of chromosomal replication. ATP-DnaA binds to the origin of replication (oriC) to initiate formation of the DNA replication initiation complex once per cell cycle. Binds the DnaA box (a 9 base pair repeat at the origin) and separates the double-stranded (ds)DNA. Forms a right-handed helical filament on oriC DNA; dsDNA binds to the exterior of the filament while single-stranded (ss)DNA is stabiized in the filament's interior. The ATP-DnaA-oriC complex binds and stabilizes one strand of the AT-rich DNA unwinding element (DUE), permitting loading of DNA polymerase. After initiation quickly degrades to an ADP-DnaA complex that is not apt for DNA replication. Binds acidic phospholipids. This Thermosipho africanus (strain TCF52B) protein is Chromosomal replication initiator protein DnaA.